Reading from the N-terminus, the 166-residue chain is NAD(P)H-quinone oxidoreductase subunit I, chloroplastic (166 aa).

4Fe-4S ferredoxin-type domains are found at residues 55–84 (GRIH…VDWK) and 95–124 (LNYS…MTEE). [4Fe-4S] cluster is bound by residues C64, C67, C70, C74, C104, C107, C110, and C114.

Belongs to the complex I 23 kDa subunit family. NDH is composed of at least 16 different subunits, 5 of which are encoded in the nucleus. The cofactor is [4Fe-4S] cluster.

The protein localises to the plastid. The protein resides in the chloroplast thylakoid membrane. It carries out the reaction a plastoquinone + NADH + (n+1) H(+)(in) = a plastoquinol + NAD(+) + n H(+)(out). The catalysed reaction is a plastoquinone + NADPH + (n+1) H(+)(in) = a plastoquinol + NADP(+) + n H(+)(out). In terms of biological role, NDH shuttles electrons from NAD(P)H:plastoquinone, via FMN and iron-sulfur (Fe-S) centers, to quinones in the photosynthetic chain and possibly in a chloroplast respiratory chain. The immediate electron acceptor for the enzyme in this species is believed to be plastoquinone. Couples the redox reaction to proton translocation, and thus conserves the redox energy in a proton gradient. This Bahiopsis tomentosa (Tecote) protein is NAD(P)H-quinone oxidoreductase subunit I, chloroplastic.